A 548-amino-acid polypeptide reads, in one-letter code: Membrane protein insertase YidC (548 aa).

The helical transmembrane segment at 6 to 26 (NLLVIALLFVSFMIWQAWEQD) threads the bilayer. The disordered stretch occupies residues 28–55 (NPQPQAQQTTQTTTTAAGSAADQGVPAS). Positions 30–50 (QPQAQQTTQTTTTAAGSAADQ) are enriched in low complexity. Helical transmembrane passes span 350-370 (FVGN…GIMY), 420-440 (LGGC…YYML), 458-478 (LSAQ…MFFI), and 499-519 (PVIF…YYIV).

Belongs to the OXA1/ALB3/YidC family. Type 1 subfamily. Interacts with the Sec translocase complex via SecD. Specifically interacts with transmembrane segments of nascent integral membrane proteins during membrane integration.

It is found in the cell inner membrane. Its function is as follows. Required for the insertion and/or proper folding and/or complex formation of integral membrane proteins into the membrane. Involved in integration of membrane proteins that insert both dependently and independently of the Sec translocase complex, as well as at least some lipoproteins. Aids folding of multispanning membrane proteins. The polypeptide is Membrane protein insertase YidC (Escherichia coli O139:H28 (strain E24377A / ETEC)).